The following is a 333-amino-acid chain: MFYDDDADLTIIQGRKVGVIGYGSQGHAHSLSLRDSGVQVKVGLKEGSKSRAKVSEQGLDVDTPAAVAKWADVIMLLAPDTAQADIFKNDIEPNLSDGDALFFGHGLNIHFGLIKPPAEVTVAMVAPKGPGHLVRRQFVDGKGVPCLIAVDQDPTGKGEALALSYAKAIGGTRAGVIKTTFKDETETDLFGEQAVLCGGTEELVKAGFDVMVESGYPPEMAYFEVLHELKLIVDLMYEGGIARMNYSVSDTAEFGGYLSGPRVIDAGTKDRMREILRDIQNGDFVKKLVANVEGGNKQLEQLRKENVEHPIEVVGKRLRDLMSWVDRPITETA.

The KARI N-terminal Rossmann domain maps to 1-179 (MFYDDDADLT…GGTRAGVIKT (179 aa)). Residues 22–25 (YGSQ), lysine 45, serine 48, serine 50, and 80–83 (DTAQ) contribute to the NADP(+) site. Histidine 105 is a catalytic residue. An NADP(+)-binding site is contributed by glycine 131. In terms of domain architecture, KARI C-terminal knotted spans 180-325 (TFKDETETDL…KRLRDLMSWV (146 aa)). Aspartate 188, glutamate 192, glutamate 224, and glutamate 228 together coordinate Mg(2+). Serine 249 contacts substrate.

This sequence belongs to the ketol-acid reductoisomerase family. The cofactor is Mg(2+).

It catalyses the reaction (2R)-2,3-dihydroxy-3-methylbutanoate + NADP(+) = (2S)-2-acetolactate + NADPH + H(+). The enzyme catalyses (2R,3R)-2,3-dihydroxy-3-methylpentanoate + NADP(+) = (S)-2-ethyl-2-hydroxy-3-oxobutanoate + NADPH + H(+). It functions in the pathway amino-acid biosynthesis; L-isoleucine biosynthesis; L-isoleucine from 2-oxobutanoate: step 2/4. Its pathway is amino-acid biosynthesis; L-valine biosynthesis; L-valine from pyruvate: step 2/4. Its function is as follows. Involved in the biosynthesis of branched-chain amino acids (BCAA). Catalyzes an alkyl-migration followed by a ketol-acid reduction of (S)-2-acetolactate (S2AL) to yield (R)-2,3-dihydroxy-isovalerate. In the isomerase reaction, S2AL is rearranged via a Mg-dependent methyl migration to produce 3-hydroxy-3-methyl-2-ketobutyrate (HMKB). In the reductase reaction, this 2-ketoacid undergoes a metal-dependent reduction by NADPH to yield (R)-2,3-dihydroxy-isovalerate. This Mycobacterium avium protein is Ketol-acid reductoisomerase (NADP(+)).